Consider the following 400-residue polypeptide: Enoyl-[acyl-carrier-protein] reductase [NADH] (400 aa).

Residues 48-53, 74-75, 111-112, and 139-140 each bind NAD(+); these read GSSSGY, FE, DA, and LA. A substrate-binding site is contributed by tyrosine 225. Tyrosine 235 (proton donor) is an active-site residue. Residues lysine 244 and 273 to 275 each bind NAD(+); that span reads VVT.

Belongs to the TER reductase family. As to quaternary structure, monomer.

It catalyses the reaction a 2,3-saturated acyl-[ACP] + NAD(+) = a (2E)-enoyl-[ACP] + NADH + H(+). Its pathway is lipid metabolism; fatty acid biosynthesis. Its function is as follows. Involved in the final reduction of the elongation cycle of fatty acid synthesis (FAS II). Catalyzes the reduction of a carbon-carbon double bond in an enoyl moiety that is covalently linked to an acyl carrier protein (ACP). In Aliivibrio salmonicida (strain LFI1238) (Vibrio salmonicida (strain LFI1238)), this protein is Enoyl-[acyl-carrier-protein] reductase [NADH].